The chain runs to 118 residues: Small ribosomal subunit protein uS13 (118 aa).

A disordered region spans residues 92–118; that stretch reads RRGLPVRGQRTKTNARTRKGPRKPIKK.

This sequence belongs to the universal ribosomal protein uS13 family. As to quaternary structure, part of the 30S ribosomal subunit. Forms a loose heterodimer with protein S19. Forms two bridges to the 50S subunit in the 70S ribosome.

Located at the top of the head of the 30S subunit, it contacts several helices of the 16S rRNA. In the 70S ribosome it contacts the 23S rRNA (bridge B1a) and protein L5 of the 50S subunit (bridge B1b), connecting the 2 subunits; these bridges are implicated in subunit movement. Contacts the tRNAs in the A and P-sites. This Yersinia pestis protein is Small ribosomal subunit protein uS13.